A 615-amino-acid polypeptide reads, in one-letter code: Alpha-fetoprotein (615 aa).

The first 15 residues, 1–15 (MAVLPLSGAIRLSRG), serve as a signal peptide directing secretion. A Cell attachment site motif is present at residues 14–16 (RGD). Albumin domains lie at 27-218 (WAKK…RRQA), 223-415 (KPIR…ELKK), and 416-609 (HIYE…VLVT). Cystine bridges form between cysteine 109–cysteine 121 and cysteine 120–cysteine 131. N-linked (GlcNAc...) asparagine glycans are attached at residues asparagine 137 and asparagine 157. 9 cysteine pairs are disulfide-bonded: cysteine 155–cysteine 200, cysteine 199–cysteine 213, cysteine 236–cysteine 282, cysteine 281–cysteine 289, cysteine 301–cysteine 315, cysteine 314–cysteine 325, cysteine 396–cysteine 405, cysteine 428–cysteine 458, and cysteine 457–cysteine 468. The Cell attachment site motif lies at 283 to 285 (RGD). Residue asparagine 472 is glycosylated (N-linked (GlcNAc...) asparagine). 4 cysteine pairs are disulfide-bonded: cysteine 485/cysteine 501, cysteine 500/cysteine 511, cysteine 538/cysteine 593, and cysteine 592/cysteine 601.

It belongs to the ALB/AFP/VDB family. As to quaternary structure, dimeric and trimeric forms have been found in addition to the monomeric form. Post-translationally, sulfated.

The protein localises to the secreted. Binds copper, nickel, and fatty acids as well as, and bilirubin less well than, serum albumin. The sequence is that of Alpha-fetoprotein (AFP) from Gallus gallus (Chicken).